A 1396-amino-acid chain; its full sequence is DNA-directed RNA polymerase subunit beta' (1396 aa).

Zn(2+)-binding residues include C70, C72, C85, and C88. 3 residues coordinate Mg(2+): D460, D462, and D464. The Zn(2+) site is built by C814, C889, C896, and C899.

This sequence belongs to the RNA polymerase beta' chain family. In terms of assembly, the RNAP catalytic core consists of 2 alpha, 1 beta, 1 beta' and 1 omega subunit. When a sigma factor is associated with the core the holoenzyme is formed, which can initiate transcription. The cofactor is Mg(2+). Zn(2+) serves as cofactor.

It carries out the reaction RNA(n) + a ribonucleoside 5'-triphosphate = RNA(n+1) + diphosphate. In terms of biological role, DNA-dependent RNA polymerase catalyzes the transcription of DNA into RNA using the four ribonucleoside triphosphates as substrates. The chain is DNA-directed RNA polymerase subunit beta' from Hahella chejuensis (strain KCTC 2396).